Reading from the N-terminus, the 233-residue chain is Small ribosomal subunit protein uS3 (233 aa).

The KH type-2 domain occupies 39 to 107 (VRTFLTKELK…PAQINISEVR (69 aa)).

The protein belongs to the universal ribosomal protein uS3 family. As to quaternary structure, part of the 30S ribosomal subunit. Forms a tight complex with proteins S10 and S14.

In terms of biological role, binds the lower part of the 30S subunit head. Binds mRNA in the 70S ribosome, positioning it for translation. This chain is Small ribosomal subunit protein uS3, found in Pseudoalteromonas translucida (strain TAC 125).